The primary structure comprises 122 residues: Large ribosomal subunit protein uL14 (122 aa).

The protein belongs to the universal ribosomal protein uL14 family. Part of the 50S ribosomal subunit. Forms a cluster with proteins L3 and L19. In the 70S ribosome, L14 and L19 interact and together make contacts with the 16S rRNA in bridges B5 and B8.

Its function is as follows. Binds to 23S rRNA. Forms part of two intersubunit bridges in the 70S ribosome. This chain is Large ribosomal subunit protein uL14, found in Alkaliphilus metalliredigens (strain QYMF).